The sequence spans 57 residues: DNA gyrase inhibitor YacG (57 aa).

C5, C8, C20, and C24 together coordinate Zn(2+).

The protein belongs to the DNA gyrase inhibitor YacG family. In terms of assembly, interacts with GyrB. It depends on Zn(2+) as a cofactor.

In terms of biological role, inhibits all the catalytic activities of DNA gyrase by preventing its interaction with DNA. Acts by binding directly to the C-terminal domain of GyrB, which probably disrupts DNA binding by the gyrase. This chain is DNA gyrase inhibitor YacG, found in Caulobacter vibrioides (strain ATCC 19089 / CIP 103742 / CB 15) (Caulobacter crescentus).